Here is a 365-residue protein sequence, read N- to C-terminus: 3-isopropylmalate dehydrogenase (365 aa).

Residues Arg96, Arg106, Arg134, and Asp224 each contribute to the substrate site. Mg(2+) contacts are provided by Asp224, Asp248, and Asp252. Position 288 to 300 (288 to 300) interacts with NAD(+); sequence GSAPTIAKQNIAN.

It belongs to the isocitrate and isopropylmalate dehydrogenases family. LeuB type 1 subfamily. Homodimer. Mg(2+) serves as cofactor. The cofactor is Mn(2+).

The protein localises to the cytoplasm. It catalyses the reaction (2R,3S)-3-isopropylmalate + NAD(+) = 4-methyl-2-oxopentanoate + CO2 + NADH. The protein operates within amino-acid biosynthesis; L-leucine biosynthesis; L-leucine from 3-methyl-2-oxobutanoate: step 3/4. Functionally, catalyzes the oxidation of 3-carboxy-2-hydroxy-4-methylpentanoate (3-isopropylmalate) to 3-carboxy-4-methyl-2-oxopentanoate. The product decarboxylates to 4-methyl-2 oxopentanoate. The chain is 3-isopropylmalate dehydrogenase from Dehalococcoides mccartyi (strain CBDB1).